We begin with the raw amino-acid sequence, 228 residues long: UPF0758 protein CKR_0778 (228 aa).

The 123-residue stretch at R106–L228 folds into the MPN domain. Residues H177, H179, and D190 each coordinate Zn(2+). Residues H177 to D190 carry the JAMM motif motif.

It belongs to the UPF0758 family.

The polypeptide is UPF0758 protein CKR_0778 (Clostridium kluyveri (strain NBRC 12016)).